The chain runs to 526 residues: Peptide chain release factor 3 (526 aa).

Residues 8-277 (NKRRTFAIIS…GLTQWAPAPQ (270 aa)) enclose the tr-type G domain. GTP contacts are provided by residues 17–24 (SHPDAGKT), 85–89 (DTPGH), and 139–142 (NKLD).

Belongs to the TRAFAC class translation factor GTPase superfamily. Classic translation factor GTPase family. PrfC subfamily.

Its subcellular location is the cytoplasm. In terms of biological role, increases the formation of ribosomal termination complexes and stimulates activities of RF-1 and RF-2. It binds guanine nucleotides and has strong preference for UGA stop codons. It may interact directly with the ribosome. The stimulation of RF-1 and RF-2 is significantly reduced by GTP and GDP, but not by GMP. The polypeptide is Peptide chain release factor 3 (Histophilus somni (strain 129Pt) (Haemophilus somnus)).